The primary structure comprises 652 residues: MAEITTREKLHEVALSAPKTSGVYLWKDKAGTVIYVGKAKSLKNRLSSYFTSNRDIKTRILVSRAESIEYIQTENEYEALLLENTLIKKHKPRYNINLKDGKTYPVLKLTNEEFPKVYRTRNIKNDGSKYFGPFPNVSAVDMFLTLIKHNYTLRQCKQLKKRETPCLYFHIGRCKAPCCGKISAEEYGKDIEEITLLLEGEMEDVSGTLKEKMKEAAEKKEFEKAARLRDGIQAVYALRGQNIVQDMDPESRDYIAWAFEGAMVSIAVLKMRNGRLVGRDLYRSHSLKEEGEILSEFISAYYTSANEVPPKIFIPQAAEGNALIEKWLNEELHAKTRISIIPLEKESLAAEERSAADSLTEIEEAASKTIGYAVKEPAPLSAQEEKLNLSPAEIKHHKAALKMARFNAKEDAMRRLREQGDFAAVEDLQKRLNLPCLPQRIEGFDIAHLGGTFTVAALISFKEGNPDKKNYRIFRLKNTDGVIDDYASMREVIARRYTRLLNEGADLPDLILIDGGIGQVNAASKIVDALDLGIPVIGLAEKNEEVYFPHNSKPVILPRRSDALRLLQRIRDEAHRFSNTRNNKLRRANKLKTEFENLPHIGKKRAHVLLKAFGSTENLKTLTAQALSETAKISLKQAEEVLDAVKTTNNNN.

The GIY-YIG domain maps to 19 to 96 (KTSGVYLWKD…IKKHKPRYNI (78 aa)). In terms of domain architecture, UVR spans 203–238 (EDVSGTLKEKMKEAAEKKEFEKAARLRDGIQAVYAL).

It belongs to the UvrC family. As to quaternary structure, interacts with UvrB in an incision complex.

It localises to the cytoplasm. Its function is as follows. The UvrABC repair system catalyzes the recognition and processing of DNA lesions. UvrC both incises the 5' and 3' sides of the lesion. The N-terminal half is responsible for the 3' incision and the C-terminal half is responsible for the 5' incision. This chain is UvrABC system protein C, found in Treponema denticola (strain ATCC 35405 / DSM 14222 / CIP 103919 / JCM 8153 / KCTC 15104).